We begin with the raw amino-acid sequence, 224 residues long: 7-cyano-7-deazaguanine synthase (224 aa).

12–22 lines the ATP pocket; the sequence is LSGGLDSSTVT. Zn(2+)-binding residues include cysteine 193, cysteine 201, cysteine 204, and cysteine 207.

The protein belongs to the QueC family. It depends on Zn(2+) as a cofactor.

The enzyme catalyses 7-carboxy-7-deazaguanine + NH4(+) + ATP = 7-cyano-7-deazaguanine + ADP + phosphate + H2O + H(+). The protein operates within purine metabolism; 7-cyano-7-deazaguanine biosynthesis. In terms of biological role, catalyzes the ATP-dependent conversion of 7-carboxy-7-deazaguanine (CDG) to 7-cyano-7-deazaguanine (preQ(0)). The polypeptide is 7-cyano-7-deazaguanine synthase (Prochlorococcus marinus (strain MIT 9515)).